Reading from the N-terminus, the 366-residue chain is MNYEKWRHPPVSLVESVKASRAVYKRLGNSGLVVSNPILGGMHIGNPKWNDWVLDEKESIALLKAAYERGVNTWDTANMYSNGESEKIMGKALRVHNIPRSKVVIMTKCCRAVTDPNIEPDIGISTAFYPELSGQSKDYVNHFGLSRASIFQQVEASLQRLNTDYIDVLQIHRFDPEVPPEETMKALHDLVQMNKVRYLGASSMWAHEFAILQHAAEKNNWTKFVSMQNHYSLLYREEEREMIKYCNLTGVGVISWGSLASGRLARPPDQRTVSPRGVNGTIYKDYNPTQSEEIIRRVHQTAVSRGIPMSQVALAWLNKRIVAPVIGLSSVERIDEALDAKAVELSHEEERYLESAYRAQSIQGHA.

An NADP(+)-binding site is contributed by Asp-75. Tyr-80 serves as the catalytic Proton donor. A substrate-binding site is contributed by His-172. NADP(+)-binding positions include 202–203 (SS), Gln-228, 257–267 (GSLASGRLARP), and 329–337 (SSVERIDEA).

The protein belongs to the aldo/keto reductase family.

The protein operates within mycotoxin biosynthesis. In terms of biological role, aldo-keto reductase; part of the gene clusters that mediate the biosynthesis of the host-selective toxins (HSTs) AF-toxins responsible for Alternaria black spot of strawberry disease by the strawberry pathotype. AF-toxin I and III are valine derivatives of 2,3-dyhydroxy-isovaleric acid and 2-hydroxy-isovaleric acid respectively, while AF II is an isoleucine derivative of 2-hydroxy-valeric acid. These derivatives are bound to a 9,10-epoxy-8-hydroxy-9-methyl-decatrienoic acid (EDA) moiety. On cellular level, AF-toxins affect plasma membrane of susceptible cells and cause a sudden increase in loss of K(+) after a few minutes of toxin treatment. The aldo-keto reductase AFTS1 catalyzes the conversion of 2-keto-isovaleric acid (2-KIV) to 2-hydroxy-isovaleric acid (2-HIV) by reduction of its ketone to an alcohol. The acyl-CoA ligase AFT1, the hydrolase AFT2 and the enoyl-CoA hydratases AFT3 and AFT6, but also the polyketide synthase AFT9, the acyl-CoA dehydrogenase AFT10, the cytochrome P450 monooxygenase AFT11 and the oxidoreductase AFT12 are all involved in the biosynthesis of the AK-, AF- and ACT-toxin common EDA structural moiety. The exact function of each enzyme, and of additional enzymes identified within the AF-toxin clusters have still to be determined. The sequence is that of Aldo-keto reductase AFTS1 from Alternaria alternata (Alternaria rot fungus).